The primary structure comprises 401 residues: Argininosuccinate synthase (401 aa).

Residues 9–17 (AYSGGLDTS) and Ala35 each bind ATP. Tyr86 provides a ligand contact to L-citrulline. Gly116 serves as a coordination point for ATP. L-aspartate-binding residues include Thr118, Asn122, and Asp123. Position 122 (Asn122) interacts with L-citrulline. The L-citrulline site is built by Arg126, Ser175, Ser184, Glu261, and Tyr273.

The protein belongs to the argininosuccinate synthase family. Type 1 subfamily. Homotetramer.

The protein resides in the cytoplasm. It carries out the reaction L-citrulline + L-aspartate + ATP = 2-(N(omega)-L-arginino)succinate + AMP + diphosphate + H(+). Its pathway is amino-acid biosynthesis; L-arginine biosynthesis; L-arginine from L-ornithine and carbamoyl phosphate: step 2/3. This is Argininosuccinate synthase from Aquifex aeolicus (strain VF5).